The chain runs to 305 residues: Insulin-like peptide (305 aa).

The N-terminal stretch at 1-22 (MNLSSVYVLASLAVVCLLVKET) is a signal peptide. Cystine bridges form between Cys-28–Cys-87, Cys-40–Cys-100, and Cys-86–Cys-91. A propeptide spans 52 to 76 (SVSKRAIDFISEQQAKDYMGAMPHI) (connecting peptide). The segment at 102–114 (PYSTAPATATPVR) is d. A propeptide spans 102-305 (PYSTAPATAT…RDSYHLTELR (204 aa)) (d/E peptide). Residues 107–118 (PATATPVRTTEP) show a composition bias toward low complexity. Disordered regions lie at residues 107–130 (PATA…PLDG) and 236–305 (HNQT…TELR). An e region spans residues 115-305 (TTEPQPEEAE…RDSYHLTELR (191 aa)). Residues 119 to 128 (QPEEAEDDPL) are compositionally biased toward acidic residues. 2 stretches are compositionally biased toward basic and acidic residues: residues 236–245 (HNQTDKKEPT) and 291–305 (RRIE…TELR).

Belongs to the insulin family.

Its subcellular location is the secreted. The sequence is that of Insulin-like peptide (ILP) from Branchiostoma californiense (California lancelet).